Consider the following 366-residue polypeptide: Spermine synthase (366 aa).

Position 2 is an N-acetylalanine (Ala2). At Ser57 the chain carries Phosphoserine. A PABS domain is found at 122 to 362; the sequence is RYWPTADGRL…ELWVFYTVWK (241 aa). Gln148 contributes to the S-adenosyl 3-(methylsulfanyl)propylamine binding site. Spermidine-binding residues include Tyr177 and Asp201. Residues Glu220 and 255–256 contribute to the S-adenosyl 3-(methylsulfanyl)propylamine site; that span reads DC. The Proton acceptor role is filled by Asp276. Spermidine is bound by residues Tyr351 and Glu353.

This sequence belongs to the spermidine/spermine synthase family. As to quaternary structure, homodimer. Dimerization is mediated through the N-terminal domain and seems to be required for activity as deletion of the N-terminal domain causes complete loss of activity.

It catalyses the reaction S-adenosyl 3-(methylsulfanyl)propylamine + spermidine = spermine + S-methyl-5'-thioadenosine + H(+). It participates in amine and polyamine biosynthesis; spermine biosynthesis; spermine from spermidine: step 1/1. Functionally, catalyzes the production of spermine from spermidine and decarboxylated S-adenosylmethionine (dcSAM). In Homo sapiens (Human), this protein is Spermine synthase.